Reading from the N-terminus, the 135-residue chain is Cytochrome b5, seed isoform (135 aa).

The Cytochrome b5 heme-binding domain occupies 5 to 81 (SKVFTLAEVS…LDEYYVGDID (77 aa)). Heme is bound by residues His40 and His64. The helical transmembrane segment at 107-127 (FIVKLLQFLVPLIILGVAFGV) threads the bilayer.

It belongs to the cytochrome b5 family. As to expression, specifically expressed in developing seeds.

Its subcellular location is the endoplasmic reticulum membrane. It is found in the microsome membrane. Its function is as follows. Cytochrome b5 is a membrane bound hemoprotein which function as an electron carrier for several membrane bound oxygenases. May play a key role in the modification by desaturation of fatty acids in the endoplasmic reticulum, which in the developing seed is utilized for membrane synthesis and in the developmentally regulated production of large amounts of storage lipids. The protein is Cytochrome b5, seed isoform of Nicotiana tabacum (Common tobacco).